Consider the following 595-residue polypeptide: Epsin-2 (595 aa).

A 1,2-diacyl-sn-glycero-3-phospho-(1D-myo-inositol-4,5-bisphosphate) is bound by residues arginine 8, lysine 11, arginine 25, asparagine 30, arginine 63, and histidine 73. Positions 12-144 (NIVNNYSEAE…KDEERLKVER (133 aa)) constitute an ENTH domain. A compositionally biased stretch (polar residues) spans 164–183 (NQITFGRGSSQPNLSTSYSE). 4 disordered regions span residues 164 to 254 (NQIT…RLRR), 267 to 289 (SRRDTVKVPKKKEAKACCKPGSH), 305 to 396 (SGPV…KPSS), and 423 to 469 (TSKK…PESF). Omega-N-methylarginine is present on arginine 170. 3 positions are modified to phosphoserine: serine 173, serine 192, and serine 195. 2 stretches are compositionally biased toward polar residues: residues 197–216 (HGSTSPRVSSELEQARPQTS) and 235–245 (EQSSESVQTAR). 2 consecutive UIM domains span residues 218 to 237 (EEELQLQLALAMSREVAEQS) and 255 to 274 (GDDLRLQMALEESRRDTVKV). Polar residues predominate over residues 306–337 (GPVTQKTEPWSAGASANQTNPWGGTVAPSNIT). 4 repeat units span residues 313-315 (EPW), 325-327 (NPW), 338-340 (DPW), and 352-354 (DPW). The tract at residues 313–389 (EPWSAGASAN…SNAGKTTDAW (77 aa)) is 6 X 3 AA repeats of [DE]-P-W. The segment covering 358 to 367 (TTASTQSVPK) has biased composition (polar residues). Residues 370 to 372 (DPW) form repeat 5. Over residues 374 to 384 (ASQQPASNAGK) the composition is skewed to polar residues. The stretch at 387 to 389 (DAW) is repeat 6. A Phosphoserine modification is found at serine 443. A compositionally biased stretch (low complexity) spans 449–460 (SQSLTSASSKPS). Phosphothreonine is present on threonine 465. 2 tandem repeats follow at residues 494-496 (NPF) and 508-510 (NPF). The 3 X 3 AA repeats of N-P-F stretch occupies residues 494–593 (NPFLAPGAAA…AQSTGTTNPF (100 aa)). Serine 526 is subject to Phosphoserine. Copy 3 of the repeat occupies 591–593 (NPF).

The protein belongs to the epsin family. As to quaternary structure, binds EPS15, AP-2 and clathrin. Interacts with UBQLN2. Interacts with ITSN1. In terms of processing, ubiquitinated.

It localises to the cytoplasm. Plays a role in the formation of clathrin-coated invaginations and endocytosis. This Mus musculus (Mouse) protein is Epsin-2 (Epn2).